The following is a 427-amino-acid chain: Enolase (427 aa).

Gln163 provides a ligand contact to (2R)-2-phosphoglycerate. Glu205 (proton donor) is an active-site residue. Mg(2+) is bound by residues Asp242, Glu285, and Asp312. Residues Lys337, Arg366, Ser367, and Lys388 each coordinate (2R)-2-phosphoglycerate. Lys337 serves as the catalytic Proton acceptor.

This sequence belongs to the enolase family. Mg(2+) is required as a cofactor.

It localises to the cytoplasm. Its subcellular location is the secreted. It is found in the cell surface. It catalyses the reaction (2R)-2-phosphoglycerate = phosphoenolpyruvate + H2O. It participates in carbohydrate degradation; glycolysis; pyruvate from D-glyceraldehyde 3-phosphate: step 4/5. Its function is as follows. Catalyzes the reversible conversion of 2-phosphoglycerate (2-PG) into phosphoenolpyruvate (PEP). It is essential for the degradation of carbohydrates via glycolysis. This Burkholderia vietnamiensis (strain G4 / LMG 22486) (Burkholderia cepacia (strain R1808)) protein is Enolase.